The sequence spans 296 residues: Guided entry of tail-anchored proteins factor CAMLG (296 aa).

Positions 1–79 (MESMAVATDG…SDKLNSLSVP (79 aa)) are disordered. The Cytoplasmic portion of the chain corresponds to 1–189 (MESMAVATDG…NTTEEFDSFR (189 aa)). At Ser-55 the chain carries Phosphoserine. Positions 61–72 (SQTKSKQQDSDK) are enriched in basic and acidic residues. The chain crosses the membrane as a helical span at residues 190–207 (IFRLVGCALLALGVRAFV). The Lumenal portion of the chain corresponds to 208-212 (CKYLS). Cys-208 and Cys-284 are oxidised to a cystine. Residues 213 to 231 (IFAPFLTLQLAYMGLYKYF) traverse the membrane as a helical segment. The Cytoplasmic portion of the chain corresponds to 232-269 (PKSEKKIKTTVLTAALLLSGIPAEVINRSMDTYSKMGE). A helical membrane pass occupies residues 270–288 (VFTDLCVYFFTFIFCHELL). Topologically, residues 289 to 296 (DYWGSEVP) are lumenal.

Component of the Golgi to ER traffic (GET) complex, which is composed of GET1/WRB, CAMLG/GET2 and GET3/TRC40. Within the complex, GET1 and CAMLG form a heterotetramer which is stabilized by phosphatidylinositol binding and which binds to the GET3 homodimer. Interacts (via C-terminus) with GET1. Interacts (via N-terminus) with GET3. GET3 shows a higher affinity for CAMLG than for GET1. Interacts (via N-terminus) with TNFRSF13B/TACI (via C-terminus). As to quaternary structure, (Microbial infection) Interacts with human herpes virus 8/HHV-8 protein K7; this interaction modulates intracellular calcium concentration. As to expression, ubiquitous. Highest levels in brain, testis and ovary.

Its subcellular location is the endoplasmic reticulum membrane. In terms of biological role, required for the post-translational delivery of tail-anchored (TA) proteins to the endoplasmic reticulum. Together with GET1/WRB, acts as a membrane receptor for soluble GET3/TRC40, which recognizes and selectively binds the transmembrane domain of TA proteins in the cytosol. Required for the stability of GET1. Stimulates calcium signaling in T cells through its involvement in elevation of intracellular calcium. Essential for the survival of peripheral follicular B cells. The chain is Guided entry of tail-anchored proteins factor CAMLG from Homo sapiens (Human).